Consider the following 520-residue polypeptide: GMP synthase [glutamine-hydrolyzing] (520 aa).

The 194-residue stretch at 12–205 (KIIVLDYGSQ…AISICGARGD (194 aa)) folds into the Glutamine amidotransferase type-1 domain. Cys-89 functions as the Nucleophile in the catalytic mechanism. Residues His-179 and Glu-181 contribute to the active site. Residues 206–395 (WSMDNFIDME…LGMPEEIVWR (190 aa)) form the GMPS ATP-PPase domain. Residue 233-239 (SGGVDSS) coordinates ATP.

In terms of assembly, homodimer.

The catalysed reaction is XMP + L-glutamine + ATP + H2O = GMP + L-glutamate + AMP + diphosphate + 2 H(+). It functions in the pathway purine metabolism; GMP biosynthesis; GMP from XMP (L-Gln route): step 1/1. Catalyzes the synthesis of GMP from XMP. This is GMP synthase [glutamine-hydrolyzing] from Streptococcus pyogenes serotype M2 (strain MGAS10270).